Here is a 276-residue protein sequence, read N- to C-terminus: NADPH-dependent 7-cyano-7-deazaguanine reductase (276 aa).

80 to 82 (VES) serves as a coordination point for substrate. NADPH is bound at residue 82-83 (SK). The active-site Thioimide intermediate is C183. D190 (proton donor) is an active-site residue. Position 222 to 223 (222 to 223 (HE)) interacts with substrate. Position 251–252 (251–252 (RG)) interacts with NADPH.

This sequence belongs to the GTP cyclohydrolase I family. QueF type 2 subfamily. Homodimer.

It is found in the cytoplasm. The enzyme catalyses 7-aminomethyl-7-carbaguanine + 2 NADP(+) = 7-cyano-7-deazaguanine + 2 NADPH + 3 H(+). It participates in tRNA modification; tRNA-queuosine biosynthesis. Functionally, catalyzes the NADPH-dependent reduction of 7-cyano-7-deazaguanine (preQ0) to 7-aminomethyl-7-deazaguanine (preQ1). This Burkholderia orbicola (strain MC0-3) protein is NADPH-dependent 7-cyano-7-deazaguanine reductase.